The chain runs to 129 residues: MGPRRKPRTPRRRPSSPVPGPSRRSSRPGKRRKFLWLKEIKKLQRSTDLLLRKLPFSRVVREICGKFTRGVDLCWQAQALLALQEAAEAFLVHLFEDAYLLTLHAGRVTIFPKDIQLTRRIRGIEGGLG.

Residues methionine 1–proline 14 are compositionally biased toward basic residues. The tract at residues methionine 1–lysine 30 is disordered. Glycine 2 bears the N,N,N-trimethylglycine mark. Serine 16, serine 22, and serine 57 each carry phosphoserine. The segment at lysine 30–glycine 129 is H3-like. The interval cysteine 64–alanine 105 is CATD.

This sequence belongs to the histone H3 family. In terms of assembly, component of centromeric nucleosomes, where DNA is wrapped around a histone octamer core. The octamer contains two molecules each of H2A, H2B, CENPA and H4 assembled in one CENPA-H4 heterotetramer and two H2A-H2B heterodimers. CENPA modulates the DNA-binding characteristics of nucleosomes so that protruding DNA ends have higher flexibility than in nucleosomes containing conventional histone H3. Inhibits binding of histone H1 to nucleosomes, since histone H1 binds preferentially to rigid DNA linkers that protrude from nucleosomes. Nucleosomes containing CENPA also contain histone H2A variants such as MACROH2A and H2A.Z/H2AZ1. The CENPA-H4 heterotetramer is more compact and structurally more rigid than corresponding H3-H4 heterotetramers. Can assemble into nucleosomes that contain both CENPA and histone H3.3; these nucleosomes interact with a single CENPC chain. Heterotrimer composed of HJURP, CENPA and histone H4, where HJURP interacts with the dimer formed by CENPA and histone H4 and prevents tetramerization of CENPA and H4. Component of the CENPA-NAC complex, at least composed of CENPA, CENPC, CENPH, CENPM, CENPN, CENPT and CENPU. Interacts (via CATD domain) with HJURP; the interaction is direct and is required for its localization to centromeres. Interacts with CENPC, CENPN and CENPT; interaction is direct. Part of a centromere complex consisting of CENPA, CENPT and CENPW. Identified in centromere complexes containing histones H2A, H2B and H4, and at least CENPA, CENPB, CENPC, CENPT, CENPN, HJURP, SUPT16H, SSRP1 and RSF1. Can self-associate. The CENPA-H4 heterotetramer can bind DNA by itself (in vitro). Interacts with CDK1, PPP1CA and RBBP7. In terms of processing, trimethylated by NTMT1 at the N-terminal glycine after cleavage of Met-1. Methylation is low before incorporation into nucleosomes and increases with cell cycle progression, with the highest levels in mitotic nucleosomes. Phosphorylated by CDK1 at Ser-57 during early mitosis; this abolishes association with chromatin and centromeres, prevents interaction with HJURP and thereby prevents premature assembly of CENPA into centromeres. Dephosphorylated at Ser-57 by PPP1CA during late mitosis. Post-translationally, poly-ADP-ribosylated by PARP1.

The protein resides in the nucleus. It is found in the chromosome. It localises to the centromere. In terms of biological role, histone H3-like nucleosomal protein that is specifically found in centromeric nucleosomes. Replaces conventional H3 in the nucleosome core of centromeric chromatin that serves as an assembly site for the inner kinetochore. The presence of CENPA subtly modifies the nucleosome structure and the way DNA is wrapped around the nucleosome and gives rise to protruding DNA ends that are less well-ordered and rigid compared to nucleosomes containing histone H3. May serve as an epigenetic mark that propagates centromere identity through replication and cell division. Required for recruitment and assembly of kinetochore proteins, and as a consequence required for progress through mitosis, chromosome segregation and cytokinesis. The protein is Histone H3-like centromeric protein A (CENPA) of Cricetulus griseus (Chinese hamster).